The sequence spans 195 residues: Thymidylate kinase (195 aa).

7 to 14 (GIDGVGKS) is an ATP binding site.

Belongs to the thymidylate kinase family.

It carries out the reaction dTMP + ATP = dTDP + ADP. Functionally, phosphorylation of dTMP to form dTDP in both de novo and salvage pathways of dTTP synthesis. The polypeptide is Thymidylate kinase (Campylobacter concisus (strain 13826)).